The sequence spans 492 residues: Probable malate:quinone oxidoreductase 1 (492 aa).

Belongs to the MQO family. It depends on FAD as a cofactor.

It catalyses the reaction (S)-malate + a quinone = a quinol + oxaloacetate. The protein operates within carbohydrate metabolism; tricarboxylic acid cycle; oxaloacetate from (S)-malate (quinone route): step 1/1. The chain is Probable malate:quinone oxidoreductase 1 from Staphylococcus epidermidis (strain ATCC 35984 / DSM 28319 / BCRC 17069 / CCUG 31568 / BM 3577 / RP62A).